The following is a 749-amino-acid chain: Basic juvenile hormone-suppressible protein 2 (749 aa).

An N-terminal signal peptide occupies residues 1–14 (MRAVLLFVVSLAAL).

It belongs to the hemocyanin family. As to expression, fat body, and hemolymph of larvae.

This chain is Basic juvenile hormone-suppressible protein 2 (BJSP-2), found in Trichoplusia ni (Cabbage looper).